A 483-amino-acid chain; its full sequence is Iroquois-class homeodomain protein IRX-5 (483 aa).

Residues 113–175 (DPAYRKNATR…NARRRLKKEN (63 aa)) constitute a DNA-binding region (homeobox; TALE-type). Disordered stretches follow at residues 177 to 392 (MTWT…QCPF) and 423 to 442 (GHPGPGPGPTTGPGSHFNGL). A compositionally biased stretch (acidic residues) spans 186-203 (EDEEEEENIDLEKNDEDE). 2 stretches are compositionally biased toward basic and acidic residues: residues 204 to 213 (PQKPEDKGDP) and 250 to 261 (SDFKEPPSEGRL). 2 stretches are compositionally biased toward low complexity: residues 266-282 (GPPRTGGPSPAGPAAAR) and 374-388 (SRASPAPAPSRSPSA). The residue at position 274 (Ser-274) is a Phosphoserine. Ser-464 is subject to Phosphoserine.

It belongs to the TALE/IRO homeobox family.

The protein localises to the nucleus. In terms of biological role, establishes the cardiac repolarization gradient by its repressive actions on the KCND2 potassium-channel gene. Required for retinal cone bipolar cell differentiation. May regulate contrast adaptation in the retina and control specific aspects of visual function in circuits of the mammalian retina. Could be involved in the regulation of both the cell cycle and apoptosis in prostate cancer cells. Involved in craniofacial and gonadal development. Modulates the migration of progenitor cell populations in branchial arches and gonads by repressing CXCL12. The sequence is that of Iroquois-class homeodomain protein IRX-5 (IRX5) from Homo sapiens (Human).